The primary structure comprises 94 residues: MEARDILKRPVITERSSELMAEKKYTFEVDTRANKTQVKDAVEEIFGVKVEKVNVLNYKGKFKRVGRYGGYTNKRRKAIVKLTADSKEIELFEM.

Belongs to the universal ribosomal protein uL23 family. As to quaternary structure, part of the 50S ribosomal subunit. Contacts protein L29, and trigger factor when it is bound to the ribosome.

One of the early assembly proteins it binds 23S rRNA. One of the proteins that surrounds the polypeptide exit tunnel on the outside of the ribosome. Forms the main docking site for trigger factor binding to the ribosome. This Lysinibacillus sphaericus (strain C3-41) protein is Large ribosomal subunit protein uL23.